Reading from the N-terminus, the 1516-residue chain is Myosin-14 (1516 aa).

The region spanning 7–56 is the Myosin N-terminal SH3-like domain; that stretch reads NVGSCVWVEDPEVAWIDGEVIEVKGSDIKVKCTSGKTVAIKVSSAYPKDV. Residues 61–738 enclose the Myosin motor domain; that stretch reads SGVDDMTRLA…QMADLDARRN (678 aa). Residues 155 to 162 and 208 to 216 contribute to the ATP site; these read GESGAGKT and NNNSSRFGK. 4 actin-binding regions span residues 494–528, 530–553, 588–612, and 612–634; these read LIEK…YQTF, DHKH…AGDV, FPLL…KQQL, and LVTL…KPNN. 6 IQ domains span residues 741–770, 764–793, 789–818, 812–841, 837–866, and 860–889; these read LGRA…VATN, LRKV…DAAV, RDAA…AAVS, LYFA…DKAA, QDKA…AAIT, and LKKA…AAKE. The stretch at 890-1056 forms a coiled coil; the sequence is TGVLEAAKSK…ENKILRQKSL (167 aa). Residues 1061-1085 form a disordered region; the sequence is GHLPPTPVKGSQNGHFSSKESPFNG. Residues 1069-1084 show a composition bias toward polar residues; sequence KGSQNGHFSSKESPFN. The 306-residue stretch at 1158–1463 folds into the Dilute domain; sequence DRLVQMIGSA…IANMRVLMTE (306 aa).

Belongs to the TRAFAC class myosin-kinesin ATPase superfamily. Myosin family. Plant myosin class XI subfamily. In terms of assembly, homodimer.

In terms of biological role, myosin heavy chain that is required for the cell cycle-regulated transport of various organelles and proteins for their segregation. Functions by binding with its tail domain to receptor proteins on organelles and exerting force with its N-terminal motor domain against actin filaments, thereby transporting its cargo along polarized actin cables. The chain is Myosin-14 (XI-H) from Arabidopsis thaliana (Mouse-ear cress).